A 97-amino-acid chain; its full sequence is Aspartyl/glutamyl-tRNA(Asn/Gln) amidotransferase subunit C (97 aa).

It belongs to the GatC family. As to quaternary structure, heterotrimer of A, B and C subunits.

The catalysed reaction is L-glutamyl-tRNA(Gln) + L-glutamine + ATP + H2O = L-glutaminyl-tRNA(Gln) + L-glutamate + ADP + phosphate + H(+). It carries out the reaction L-aspartyl-tRNA(Asn) + L-glutamine + ATP + H2O = L-asparaginyl-tRNA(Asn) + L-glutamate + ADP + phosphate + 2 H(+). In terms of biological role, allows the formation of correctly charged Asn-tRNA(Asn) or Gln-tRNA(Gln) through the transamidation of misacylated Asp-tRNA(Asn) or Glu-tRNA(Gln) in organisms which lack either or both of asparaginyl-tRNA or glutaminyl-tRNA synthetases. The reaction takes place in the presence of glutamine and ATP through an activated phospho-Asp-tRNA(Asn) or phospho-Glu-tRNA(Gln). The protein is Aspartyl/glutamyl-tRNA(Asn/Gln) amidotransferase subunit C of Synechococcus sp. (strain JA-3-3Ab) (Cyanobacteria bacterium Yellowstone A-Prime).